The following is a 185-amino-acid chain: Large ribosomal subunit protein uL16m (185 aa).

Belongs to the universal ribosomal protein uL16 family.

The protein localises to the mitochondrion. The chain is Large ribosomal subunit protein uL16m (RPL16) from Oryza sativa subsp. japonica (Rice).